Reading from the N-terminus, the 453-residue chain is Ankyrin repeat and SOCS box protein 16 (453 aa).

ANK repeat units lie at residues Cys56–Met85, Lys110–Ala139, Gly142–Val171, Glu175–Val204, Ser209–Leu238, Gln242–Ala279, and Lys283–Val312. The 57-residue stretch at Phe397–Gln453 folds into the SOCS box domain.

This sequence belongs to the ankyrin SOCS box (ASB) family.

It participates in protein modification; protein ubiquitination. Functionally, may be a substrate-recognition component of a SCF-like ECS (Elongin-Cullin-SOCS-box protein) E3 ubiquitin-protein ligase complex which mediates the ubiquitination and subsequent proteasomal degradation of target proteins. This is Ankyrin repeat and SOCS box protein 16 (Asb16) from Mus musculus (Mouse).